Here is a 107-residue protein sequence, read N- to C-terminus: Quaternary ammonium compound-resistance protein QacH (107 aa).

A run of 4 helical transmembrane segments spans residues 1-21, 26-46, 57-77, and 84-104; these read MPYLYLLLSIVSEVIGSAFLK, FSKLYPTITTIISFLICFYFL, ITYASWAGLGLVLTTIVSVLI, and LISIISIILIIFGVVLLNTFG.

It belongs to the drug/metabolite transporter (DMT) superfamily. Small multidrug resistance (SMR) (TC 2.A.7.1) family.

It localises to the cell membrane. Multidrug exporter. Is implicated for the resistance to bacteriocidal quaternary ammonium compounds. This is Quaternary ammonium compound-resistance protein QacH (qacH) from Staphylococcus saprophyticus.